A 358-amino-acid chain; its full sequence is Peptide chain release factor 1 (358 aa).

Gln-237 carries the post-translational modification N5-methylglutamine.

Belongs to the prokaryotic/mitochondrial release factor family. Methylated by PrmC. Methylation increases the termination efficiency of RF1.

It is found in the cytoplasm. Functionally, peptide chain release factor 1 directs the termination of translation in response to the peptide chain termination codons UAG and UAA. The sequence is that of Peptide chain release factor 1 from Streptomyces griseus subsp. griseus (strain JCM 4626 / CBS 651.72 / NBRC 13350 / KCC S-0626 / ISP 5235).